A 104-amino-acid chain; its full sequence is Large ribosomal subunit protein bL21 (104 aa).

This sequence belongs to the bacterial ribosomal protein bL21 family. Part of the 50S ribosomal subunit. Contacts protein L20.

This protein binds to 23S rRNA in the presence of protein L20. This is Large ribosomal subunit protein bL21 from Endomicrobium trichonymphae.